Reading from the N-terminus, the 237-residue chain is Phosphoribosylaminoimidazole-succinocarboxamide synthase (237 aa).

Belongs to the SAICAR synthetase family.

It carries out the reaction 5-amino-1-(5-phospho-D-ribosyl)imidazole-4-carboxylate + L-aspartate + ATP = (2S)-2-[5-amino-1-(5-phospho-beta-D-ribosyl)imidazole-4-carboxamido]succinate + ADP + phosphate + 2 H(+). Its pathway is purine metabolism; IMP biosynthesis via de novo pathway; 5-amino-1-(5-phospho-D-ribosyl)imidazole-4-carboxamide from 5-amino-1-(5-phospho-D-ribosyl)imidazole-4-carboxylate: step 1/2. This chain is Phosphoribosylaminoimidazole-succinocarboxamide synthase, found in Psychrobacter cryohalolentis (strain ATCC BAA-1226 / DSM 17306 / VKM B-2378 / K5).